Consider the following 504-residue polypeptide: Deoxyguanosinetriphosphate triphosphohydrolase (504 aa).

Residues 66 to 273 (RLTHSMEVQQ…MEAADDISYC (208 aa)) form the HD domain.

The protein belongs to the dGTPase family. Type 1 subfamily. As to quaternary structure, homotetramer. Mg(2+) serves as cofactor.

It catalyses the reaction dGTP + H2O = 2'-deoxyguanosine + triphosphate + H(+). DGTPase preferentially hydrolyzes dGTP over the other canonical NTPs. This Citrobacter koseri (strain ATCC BAA-895 / CDC 4225-83 / SGSC4696) protein is Deoxyguanosinetriphosphate triphosphohydrolase.